The chain runs to 388 residues: Deoxyuridine 5'-triphosphate nucleotidohydrolase (388 aa).

Positions 77-88 are enriched in basic and acidic residues; the sequence is EEKYDKEQHPGE. 2 disordered regions span residues 77-96 and 336-388; these read EEKY…SPLP and THTP…PRHP. The span at 351–363 shows a compositional bias: acidic residues; that stretch reads VDDDVDETEEDEK.

This sequence belongs to the dUTPase family. Mg(2+) is required as a cofactor.

It carries out the reaction dUTP + H2O = dUMP + diphosphate + H(+). It functions in the pathway pyrimidine metabolism; dUMP biosynthesis; dUMP from dCTP (dUTP route): step 2/2. Involved in nucleotide metabolism: produces dUMP, the immediate precursor of thymidine nucleotides and decreases the intracellular concentration of dUTP to avoid uracil incorporation into viral DNA. The sequence is that of Deoxyuridine 5'-triphosphate nucleotidohydrolase from Homo sapiens (Human).